Here is a 120-residue protein sequence, read N- to C-terminus: LOB domain-containing protein 8 (120 aa).

One can recognise an LOB domain in the interval Arg8 to Ile109.

This sequence belongs to the LOB domain-containing protein family.

This is LOB domain-containing protein 8 (LBD8) from Arabidopsis thaliana (Mouse-ear cress).